We begin with the raw amino-acid sequence, 243 residues long: Glutathione S-transferase omega-2 (243 aa).

Positions 22-101 (GLIRIYSMRF…YLDDAYPGRK (80 aa)) constitute a GST N-terminal domain. Residue Cys32 is the Nucleophile of the active site. Residues Lys59, Ile72, and 85–86 (ES) each bind glutathione. The GST C-terminal domain occupies 106–231 (DPYERARQKM…IFQGFLNLYF (126 aa)).

It belongs to the GST superfamily. Omega family. In terms of tissue distribution, expressed in a range of tissues, including the liver, kidney, skeletal muscle and prostate. Strongest expression in the testis.

It catalyses the reaction RX + glutathione = an S-substituted glutathione + a halide anion + H(+). It carries out the reaction L-dehydroascorbate + 2 glutathione = glutathione disulfide + L-ascorbate. The catalysed reaction is methylarsonate + 2 glutathione + H(+) = methylarsonous acid + glutathione disulfide + H2O. Exhibits glutathione-dependent thiol transferase activity. Has high dehydroascorbate reductase activity and may contribute to the recycling of ascorbic acid. Participates in the biotransformation of inorganic arsenic and reduces monomethylarsonic acid (MMA). This chain is Glutathione S-transferase omega-2 (GSTO2), found in Homo sapiens (Human).